The sequence spans 102 residues: Pole-localizer protein TmaR (102 aa).

Residues 7–34 are a coiled coil; sequence IINQARRKNKLKRELQDNQKKIRDNQKR.

The protein belongs to the pole-localizer TmaR family.

It localises to the cytoplasm. Its function is as follows. Pole-localizer protein involved in the regulation of several cellular processes. This chain is Pole-localizer protein TmaR, found in Aliivibrio fischeri (strain ATCC 700601 / ES114) (Vibrio fischeri).